The sequence spans 362 residues: Putative glutamate--cysteine ligase 2-1 (362 aa).

The protein belongs to the glutamate--cysteine ligase type 2 family. YbdK subfamily.

The enzyme catalyses L-cysteine + L-glutamate + ATP = gamma-L-glutamyl-L-cysteine + ADP + phosphate + H(+). Its function is as follows. ATP-dependent carboxylate-amine ligase which exhibits weak glutamate--cysteine ligase activity. This chain is Putative glutamate--cysteine ligase 2-1, found in Streptomyces avermitilis (strain ATCC 31267 / DSM 46492 / JCM 5070 / NBRC 14893 / NCIMB 12804 / NRRL 8165 / MA-4680).